Here is a 121-residue protein sequence, read N- to C-terminus: MAAVSVDPQRPLPVLLVSVSLGIYEDEHHRVWIAVNVETSHSSHGNRIETCVTVHLQHMTTLPQEPTPQQPINNNSLPTMWRLESRNTYTGTDGTYWRLLDHSQMGDTVQLTLDIIIGEDD.

Belongs to the TCL1 family.

In Mus musculus (Mouse), this protein is Protein TCL1B5 (Tcl1b5).